The following is a 606-amino-acid chain: Mitogen-activated protein kinase kinase kinase 7 (606 aa).

An interaction with MAPK8IP1 region spans residues 1–300 (MSTASAASSS…FPGADEPLQY (300 aa)). The Protein kinase domain maps to 36-291 (IEVEEVVGRG…KIMTHLMRYF (256 aa)). ATP-binding positions include 42-50 (VGRGAFGVV) and Lys-63. Lys-72 participates in a covalent cross-link: Glycyl lysine isopeptide (Lys-Gly) (interchain with G-Cter in ubiquitin). The Proton acceptor role is filled by Asp-156. Lys-158 is covalently cross-linked (Glycyl lysine isopeptide (Lys-Gly) (interchain with G-Cter in ubiquitin)). A (Microbial infection) O-acetylthreonine; by Yersinia YopJ; alternate mark is found at Thr-184 and Thr-187. Phosphothreonine; by autocatalysis; alternate occurs at positions 184 and 187. A Phosphoserine; by autocatalysis modification is found at Ser-192. Lys-209 participates in a covalent cross-link: Glycyl lysine isopeptide (Lys-Gly) (interchain with G-Cter in ubiquitin). Residues 301-338 (PCQYSDEGQSNSATSTGSFMDIASTNTSNKSDTNMEQV) are disordered. Residues 306 to 338 (DEGQSNSATSTGSFMDIASTNTSNKSDTNMEQV) show a composition bias toward polar residues. Thr-341 carries the (Microbial infection) O-acetylthreonine; by Yersinia YopJ; alternate modification. Residues 354–391 (KNQAKQQSESGRLSLGASRGSSVESLPPTSEGKRMSAD) are disordered. A compositionally biased stretch (low complexity) spans 361–375 (SESGRLSLGASRGSS). 3 positions are modified to phosphoserine: Ser-367, Ser-389, and Ser-439. Positions 443–452 (LTVTGTEPGQ) are enriched in polar residues. The interval 443-493 (LTVTGTEPGQVSSRSSSPSVRMITTSGPTSEKPTRSHPWTPDDSTDTNGSD) is disordered. A (Microbial infection) O-acetylthreonine; by Yersinia YopJ; alternate mark is found at Thr-444, Thr-446, and Thr-448. A compositionally biased stretch (low complexity) spans 453–463 (VSSRSSSPSVR). The residue at position 455 (Ser-455) is a Phosphoserine. Residues 464 to 473 (MITTSGPTSE) show a composition bias toward polar residues. Thr-467 carries the (Microbial infection) O-acetylthreonine; by Yersinia YopJ; alternate modification.

This sequence belongs to the protein kinase superfamily. STE Ser/Thr protein kinase family. MAP kinase kinase kinase subfamily. As to quaternary structure, can form homodimer. Binds both upstream activators and downstream substrates in multimolecular complexes. Interacts with TAB1/MAP3K7IP1, TAB2/MAP3K7IP2 and TAB3/MAP3K7IP3. Identified in the TRIKA2 complex composed of MAP3K7/TAK1, TAB1/MAP3K7IP1 and TAB2/MAP3K7IP2. Interacts with PPM1L and PPM1B/PP2CB. Interaction with PP2A and PPP6C leads to its repressed activity. Interacts with TRAF6 and TAB1/MAP3K7IP1; during IL-1 signaling. Interacts with TAOK1 and TAOK2; interaction with TAOK2 interferes with MAP3K7 interaction with IKKA, thus preventing NF-kappa-B activation. Interacts with DYNC2I2 (via WD domains). Interacts with CYLD and RBCK1. Interacts with TGFBR1; induces MAP3K7/TAK1 activation by TRAF6. Interacts with MAPK8IP1 and SMAD6. Interacts with isoform 1 of VRK2. Interacts with DAB2; the interaction is induced by TGF-beta stimulation and may mediate TGF-beta stimulated JNK activation. Interacts with TRIM5. Part of a complex containing ITCH, NDFIP1 and MAP3K7. Interacts with IFIT5; the interaction synergizes the recruitment of IKK to MAP3K7 and enhances IKK phosphorylation. Interacts with PLEKHM1 (via N- and C-terminus). Interacts with TRIM8. Found in a complex with SH3RF1, RAC2, MAP2K7/MKK7, MAPK8IP1/JIP1, MAPK8/JNK1 and MAPK9/JNK2. Interacts with SASH1. Interacts with RIPK1. (Microbial infection) Interacts with herpes simplex virus 2 protein US2; this interaction induces MAP3K7 phosphorylation and subsequent activation. Mg(2+) serves as cofactor. Post-translationally, association with TAB1/MAP3K7IP1 promotes autophosphorylation at Ser-192 and subsequent activation. Association with TAB2/MAP3K7IP2, itself associated with free unanchored Lys-63 polyubiquitin chain, promotes autophosphorylation and subsequent activation of MAP3K7. Dephosphorylation at Ser-192 by PPM1B/PP2CB and at Thr-187 by PP2A and PPP6C leads to inactivation. In terms of processing, 'Lys-48'-linked polyubiquitination at Lys-72 is induced by TNFalpha, and leads to proteasomal degradation. Undergoes 'Lys-48'-linked polyubiquitination catalyzed by ITCH. Requires 'Lys-63'-linked polyubiquitination for autophosphorylation and subsequent activation. 'Lys-63'-linked ubiquitination does not lead to proteasomal degradation. Deubiquitinated by CYLD, a protease that selectively cleaves 'Lys-63'-linked ubiquitin chains. Deubiquitinated by Y.enterocolitica YopP. Deubiquitinated by USP19; leading to negative regulation of TNF-alpha- and IL-1beta-triggered NF-kappa-B activation. (Microbial infection) Cleaved and inactivated by the proteases 3C of coxsackievirus A16 and human enterovirus D68, allowing the virus to disrupt TRAF6-triggered NF-kappa-B induction. Post-translationally, (Microbial infection) Acetylation of Thr-184 and Thr-187 by Yersinia YopJ prevents phosphorylation and activation, thus blocking the MAPK signaling pathway. Isoform 1A is the most abundant in ovary, skeletal muscle, spleen and blood mononuclear cells. Isoform 1B is highly expressed in brain, kidney and small intestine. Isoform 1C is the major form in prostate. Isoform 1D is the less abundant form.

It localises to the cytoplasm. The protein resides in the cell membrane. It carries out the reaction L-seryl-[protein] + ATP = O-phospho-L-seryl-[protein] + ADP + H(+). The catalysed reaction is L-threonyl-[protein] + ATP = O-phospho-L-threonyl-[protein] + ADP + H(+). With respect to regulation, activated by pro-inflammatory cytokines and in response to physical and chemical stresses, including osmotic stress, oxidative stress, arsenic and ultraviolet light irradiation. Activated by 'Lys-63'-linked polyubiquitination and by autophosphorylation. Association with TAB1/MAP3K7IP1 and TAB2/MAP3K7IP2 promotes activation through autophosphorylation, whereas PPM1B/PP2CB, PP2A and PPP6C dephosphorylation leads to inactivation. Ceramides are also able to activate MAP3K7/TAK1. Serine/threonine kinase which acts as an essential component of the MAP kinase signal transduction pathway. Plays an important role in the cascades of cellular responses evoked by changes in the environment. Mediates signal transduction of TRAF6, various cytokines including interleukin-1 (IL-1), transforming growth factor-beta (TGFB), TGFB-related factors like BMP2 and BMP4, toll-like receptors (TLR), tumor necrosis factor receptor CD40 and B-cell receptor (BCR). Once activated, acts as an upstream activator of the MKK/JNK signal transduction cascade and the p38 MAPK signal transduction cascade through the phosphorylation and activation of several MAP kinase kinases like MAP2K1/MEK1, MAP2K3/MKK3, MAP2K6/MKK6 and MAP2K7/MKK7. These MAP2Ks in turn activate p38 MAPKs and c-jun N-terminal kinases (JNKs); both p38 MAPK and JNK pathways control the transcription factors activator protein-1 (AP-1). Independently of MAP2Ks and p38 MAPKs, acts as a key activator of NF-kappa-B by promoting activation of the I-kappa-B-kinase (IKK) core complex. Mechanistically, recruited to polyubiquitin chains of RIPK2 and IKBKG/NEMO via TAB2/MAP3K7IP2 and TAB3/MAP3K7IP3, and catalyzes phosphorylation and activation of IKBKB/IKKB component of the IKK complex, leading to NF-kappa-B activation. In osmotic stress signaling, plays a major role in the activation of MAPK8/JNK1, but not that of NF-kappa-B. Promotes TRIM5 capsid-specific restriction activity. Phosphorylates RIPK1 at 'Ser-321' which positively regulates RIPK1 interaction with RIPK3 to promote necroptosis but negatively regulates RIPK1 kinase activity and its interaction with FADD to mediate apoptosis. Phosphorylates STING1 in response to cGAMP-activation, promoting association between STEEP1 and STING1 and STING1 translocation to COPII vesicles. This Homo sapiens (Human) protein is Mitogen-activated protein kinase kinase kinase 7.